The following is a 251-amino-acid chain: MRTPIIAGNWKLHMNPEQTVEFVNAVKGKLPDPSKVESVIAAPAVDLYVLKKAAEGSDLHTGAENAYFEVEGAFTGETSPKVLNEMGIDYCIIGHSERRGYFHETDEDINKKAKALFANGVTPIICCGESLETREANKQEDWVVAQIKAALDGLTAEQVSKLVIAYEPIWAIGTGKTASADQAEEMCKTIRETVKDLYNEETAENVRIQYGGSVKPANVKELMSKPDIDGGLVGGASLDPESFLALVNYQD.

9–11 (NWK) is a binding site for substrate. Histidine 95 acts as the Electrophile in catalysis. Residue glutamate 167 is the Proton acceptor of the active site. Substrate is bound by residues glycine 173, serine 213, and 234–235 (GG).

It belongs to the triosephosphate isomerase family. As to quaternary structure, homodimer.

The protein localises to the cytoplasm. It catalyses the reaction D-glyceraldehyde 3-phosphate = dihydroxyacetone phosphate. It participates in carbohydrate biosynthesis; gluconeogenesis. The protein operates within carbohydrate degradation; glycolysis; D-glyceraldehyde 3-phosphate from glycerone phosphate: step 1/1. Involved in the gluconeogenesis. Catalyzes stereospecifically the conversion of dihydroxyacetone phosphate (DHAP) to D-glyceraldehyde-3-phosphate (G3P). The protein is Triosephosphate isomerase of Lactobacillus gasseri (strain ATCC 33323 / DSM 20243 / BCRC 14619 / CIP 102991 / JCM 1131 / KCTC 3163 / NCIMB 11718 / NCTC 13722 / AM63).